Here is a 113-residue protein sequence, read N- to C-terminus: Large ribosomal subunit protein bL17 (113 aa).

The protein belongs to the bacterial ribosomal protein bL17 family. In terms of assembly, part of the 50S ribosomal subunit. Contacts protein L32.

The sequence is that of Large ribosomal subunit protein bL17 from Caldicellulosiruptor bescii (strain ATCC BAA-1888 / DSM 6725 / KCTC 15123 / Z-1320) (Anaerocellum thermophilum).